The chain runs to 468 residues: GDNF family receptor alpha-1 (468 aa).

An N-terminal signal peptide occupies residues 1–24 (MFLATLYFALPLLDLLMSAEVSGG). A run of 3 repeats spans residues 25–113 (DRLD…LQGN), 150–238 (KGNN…YEER), and 239–342 (ERPN…KNAI). Cys36 and Cys42 form a disulfide bridge. N-linked (GlcNAc...) asparagine glycosylation occurs at Asn59. Cystine bridges form between Cys154-Cys214, Cys161-Cys167, Cys178-Cys192, Cys187-Cys233, Cys216-Cys221, Cys243-Cys313, Cys250-Cys256, Cys267-Cys285, Cys277-Cys337, and Cys315-Cys325. 2 N-linked (GlcNAc...) asparagine glycosylation sites follow: Asn347 and Asn406. Ser430 is lipidated: GPI-anchor amidated serine. Residues 431–468 (HITTKSMAAPPSCSLSSLPVLMLTALAALLSVSLAETS) constitute a propeptide, removed in mature form.

It belongs to the GDNFR family. In terms of assembly, interacts with GDNF ligand and RET: forms a 2:2:2 ternary complex composed of GDNF ligand, GFRA1 and RET receptor. Interacts with SORL1, either alone or in complex with GDNF. Interaction between SORL1 and GFRA1 leads to GFRA1 internalization, but not degradation. In terms of tissue distribution, expressed in liver, brain, kidney and cochlea.

The protein localises to the cell membrane. Its subcellular location is the golgi apparatus. The protein resides in the trans-Golgi network. It localises to the endosome. It is found in the multivesicular body. Coreceptor for GDNF, a neurotrophic factor that enhances survival and morphological differentiation of dopaminergic neurons and increases their high-affinity dopamine uptake. GDNF-binding leads to autophosphorylation and activation of the RET receptor. In Rattus norvegicus (Rat), this protein is GDNF family receptor alpha-1 (Gfra1).